Consider the following 331-residue polypeptide: Probable tRNA pseudouridine synthase B (331 aa).

Asp-66 functions as the Nucleophile in the catalytic mechanism. Positions 233-307 constitute a PUA domain; that stretch reads INKIIVKDSA…NEEDNREKYK (75 aa).

It belongs to the pseudouridine synthase TruB family. Type 2 subfamily.

It catalyses the reaction uridine(55) in tRNA = pseudouridine(55) in tRNA. Functionally, could be responsible for synthesis of pseudouridine from uracil-55 in the psi GC loop of transfer RNAs. The protein is Probable tRNA pseudouridine synthase B of Methanococcus aeolicus (strain ATCC BAA-1280 / DSM 17508 / OCM 812 / Nankai-3).